The primary structure comprises 365 residues: tRNA/tmRNA (uracil-C(5))-methyltransferase (365 aa).

Gln189, Tyr217, Asn222, Glu238, and Asp298 together coordinate S-adenosyl-L-methionine. The active-site Nucleophile is Cys323. The active-site Proton acceptor is the Glu357.

Belongs to the class I-like SAM-binding methyltransferase superfamily. RNA M5U methyltransferase family. TrmA subfamily.

It carries out the reaction uridine(54) in tRNA + S-adenosyl-L-methionine = 5-methyluridine(54) in tRNA + S-adenosyl-L-homocysteine + H(+). The catalysed reaction is uridine(341) in tmRNA + S-adenosyl-L-methionine = 5-methyluridine(341) in tmRNA + S-adenosyl-L-homocysteine + H(+). Dual-specificity methyltransferase that catalyzes the formation of 5-methyluridine at position 54 (m5U54) in all tRNAs, and that of position 341 (m5U341) in tmRNA (transfer-mRNA). This Shewanella sp. (strain MR-4) protein is tRNA/tmRNA (uracil-C(5))-methyltransferase.